Consider the following 911-residue polypeptide: Protein translocase subunit SecA (911 aa).

ATP is bound by residues Gln-87, 105–109 (GEGKT), and Asp-512. Residues 561–571 (RHESRRIDNQL) are compositionally biased toward basic and acidic residues. Residues 561 to 583 (RHESRRIDNQLRGRSGRQGDPGS) are disordered. Residues Cys-895, Cys-897, Cys-906, and His-907 each coordinate Zn(2+).

Belongs to the SecA family. As to quaternary structure, monomer and homodimer. Part of the essential Sec protein translocation apparatus which comprises SecA, SecYEG and auxiliary proteins SecDF-YajC and YidC. Zn(2+) serves as cofactor.

Its subcellular location is the cell inner membrane. It is found in the cytoplasm. The enzyme catalyses ATP + H2O + cellular proteinSide 1 = ADP + phosphate + cellular proteinSide 2.. Part of the Sec protein translocase complex. Interacts with the SecYEG preprotein conducting channel. Has a central role in coupling the hydrolysis of ATP to the transfer of proteins into and across the cell membrane, serving both as a receptor for the preprotein-SecB complex and as an ATP-driven molecular motor driving the stepwise translocation of polypeptide chains across the membrane. This is Protein translocase subunit SecA from Pseudomonas putida (strain W619).